A 415-amino-acid chain; its full sequence is ATP-dependent Clp protease ATP-binding subunit ClpX (415 aa).

Residues 1 to 53 (MLRSKGDLVLGCSFCGKKEDERRRIVTGHGVSICNYCVERCAEYLRDRKPSAL) enclose the ClpX-type ZB domain. Zn(2+) contacts are provided by Cys-12, Cys-15, Cys-34, and Cys-37. ATP is bound at residue 118 to 125 (PTGSGKTL).

The protein belongs to the ClpX chaperone family. Component of the ClpX-ClpP complex. Forms a hexameric ring that, in the presence of ATP, binds to fourteen ClpP subunits assembled into a disk-like structure with a central cavity, resembling the structure of eukaryotic proteasomes.

In terms of biological role, ATP-dependent specificity component of the Clp protease. It directs the protease to specific substrates. Can perform chaperone functions in the absence of ClpP. This is ATP-dependent Clp protease ATP-binding subunit ClpX from Treponema pallidum (strain Nichols).